We begin with the raw amino-acid sequence, 200 residues long: Late embryogenesis abundant protein 19 (200 aa).

2 disordered regions span residues 1-158 (MASH…KSTV) and 172-200 (TEDKAGTDDGANKDTSATAAATETTARDH). Basic and acidic residues-rich tracts occupy residues 13 to 23 (GETKAHTEEKA), 30 to 42 (SKDKASEAKDRAS), 53 to 81 (QDTKEATKEKAQAAKERASETAQAAKDKT), 88 to 97 (ARDKAAESKD), and 105 to 114 (EKTEQAKQKA). Residues 52–81 (GQDTKEATKEKAQAAKERASETAQAAKDKT) adopt a coiled-coil conformation. Over residues 115–130 (AETAGAAKQKTAETAQ) the composition is skewed to low complexity. Positions 145 to 156 (SVLQQASEQVKS) are enriched in polar residues. Residues 172-183 (TEDKAGTDDGAN) show a composition bias toward basic and acidic residues. A compositionally biased stretch (low complexity) spans 186 to 200 (TSATAAATETTARDH).

Belongs to the LEA type 4 family. In terms of tissue distribution, expressed in the shoot apex and leaves.

Its function is as follows. Involved in response to drought stress. In Oryza sativa subsp. indica (Rice), this protein is Late embryogenesis abundant protein 19.